Reading from the N-terminus, the 179-residue chain is Shikimate kinase (179 aa).

Position 22-27 (22-27 (GTGKSS)) interacts with ATP. Mg(2+) is bound at residue S26. Residues D44, R68, and G90 each coordinate substrate. R128 serves as a coordination point for ATP. Substrate is bound at residue R147.

Belongs to the shikimate kinase family. Monomer. Mg(2+) serves as cofactor.

Its subcellular location is the cytoplasm. It carries out the reaction shikimate + ATP = 3-phosphoshikimate + ADP + H(+). Its pathway is metabolic intermediate biosynthesis; chorismate biosynthesis; chorismate from D-erythrose 4-phosphate and phosphoenolpyruvate: step 5/7. Its function is as follows. Catalyzes the specific phosphorylation of the 3-hydroxyl group of shikimic acid using ATP as a cosubstrate. In Geobacter metallireducens (strain ATCC 53774 / DSM 7210 / GS-15), this protein is Shikimate kinase.